A 234-amino-acid polypeptide reads, in one-letter code: MHIPKSLQELANSEAVQFLRRPKTITRVFEGVFSLIVFSSLLTDGYQNKMESPQLHCILNSNSVACSFAVGAGFLAFLSCLAFLVLDTQETRIAGTRFKTAFQLLDFILAVLWAVVWFMGFCFLANQWQHSPPKEFLLGSSSAQAAIAFTFFSILVWIFQAYLAFQDLRNDAPVPYKRFLDEGGMVLTTLPLPSANSPVNMPTTGPNSLSYASSALSPCLTAPKSPRLAMMPDN.

The MARVEL domain occupies 18 to 169 (FLRRPKTITR…QAYLAFQDLR (152 aa)). The next 4 helical transmembrane spans lie at 25–45 (ITRV…LTDG), 66–86 (CSFA…FLVL), 104–124 (LLDF…FCFL), and 145–165 (AAIA…YLAF).

The protein belongs to the synaptogyrin family.

It localises to the membrane. The sequence is that of Synaptogyrin-4 (SYNGR4) from Homo sapiens (Human).